Here is a 362-residue protein sequence, read N- to C-terminus: 3-dehydroquinate synthase (362 aa).

NAD(+)-binding positions include 71 to 76 (DGEQYK), 105 to 109 (GVIGD), 129 to 130 (TT), lysine 142, lysine 151, and 169 to 172 (CLQT). The Zn(2+) site is built by glutamate 184, histidine 247, and histidine 264.

It belongs to the sugar phosphate cyclases superfamily. Dehydroquinate synthase family. The cofactor is Co(2+). Requires Zn(2+) as cofactor. NAD(+) is required as a cofactor.

It is found in the cytoplasm. The enzyme catalyses 7-phospho-2-dehydro-3-deoxy-D-arabino-heptonate = 3-dehydroquinate + phosphate. Its pathway is metabolic intermediate biosynthesis; chorismate biosynthesis; chorismate from D-erythrose 4-phosphate and phosphoenolpyruvate: step 2/7. Its function is as follows. Catalyzes the conversion of 3-deoxy-D-arabino-heptulosonate 7-phosphate (DAHP) to dehydroquinate (DHQ). The polypeptide is 3-dehydroquinate synthase (Cronobacter sakazakii (strain ATCC BAA-894) (Enterobacter sakazakii)).